A 353-amino-acid polypeptide reads, in one-letter code: MRKAKNAVVMQKQQYNINKLQKRLRRHVGQAIADYAMIEEGDRIMVCLSGGKDSYTLLEILRNLQQSAPVNFSLVAVNLDQKQPGFPAHVLPEYLAAQGVEYHIVTEDTYHIVKDKIPEGKTTCSLCSRLRRGILYRTATELGATRIALGHHQDDILQTLFLNMFYGGKLKGMPPKLMSDDGKHIVIRPLAYCREKDIARFAQARQFPIIPCNLCGSQPNLQRQVIGDMLRDWDKRYPGRSETLFRAMQNVVPSHLSDTHLFDFKGLMQGSAVVDGGDIAFDRESFPAQPAGWQDLMDDDLPVSSRNDNWTCSNCAEYAQSAPPTQQRKALTGPQARIAGAPVIPLATRHPPW.

The PP-loop motif motif lies at 49 to 54; that stretch reads SGGKDS. Cys124, Cys127, and Cys215 together coordinate [4Fe-4S] cluster.

This sequence belongs to the TtcA family. In terms of assembly, homodimer. Requires Mg(2+) as cofactor. [4Fe-4S] cluster is required as a cofactor.

Its subcellular location is the cytoplasm. The catalysed reaction is cytidine(32) in tRNA + S-sulfanyl-L-cysteinyl-[cysteine desulfurase] + AH2 + ATP = 2-thiocytidine(32) in tRNA + L-cysteinyl-[cysteine desulfurase] + A + AMP + diphosphate + H(+). It participates in tRNA modification. In terms of biological role, catalyzes the ATP-dependent 2-thiolation of cytidine in position 32 of tRNA, to form 2-thiocytidine (s(2)C32). The sulfur atoms are provided by the cysteine/cysteine desulfurase (IscS) system. This is tRNA-cytidine(32) 2-sulfurtransferase from Sodalis glossinidius (strain morsitans).